The sequence spans 360 residues: Histidinol-phosphate aminotransferase (360 aa).

Lys-222 is modified (N6-(pyridoxal phosphate)lysine).

This sequence belongs to the class-II pyridoxal-phosphate-dependent aminotransferase family. Histidinol-phosphate aminotransferase subfamily. As to quaternary structure, homodimer. Requires pyridoxal 5'-phosphate as cofactor.

It catalyses the reaction L-histidinol phosphate + 2-oxoglutarate = 3-(imidazol-4-yl)-2-oxopropyl phosphate + L-glutamate. Its pathway is amino-acid biosynthesis; L-histidine biosynthesis; L-histidine from 5-phospho-alpha-D-ribose 1-diphosphate: step 7/9. The sequence is that of Histidinol-phosphate aminotransferase from Listeria welshimeri serovar 6b (strain ATCC 35897 / DSM 20650 / CCUG 15529 / CIP 8149 / NCTC 11857 / SLCC 5334 / V8).